We begin with the raw amino-acid sequence, 175 residues long: Small ribosomal subunit protein uS7 (175 aa).

It belongs to the universal ribosomal protein uS7 family. Part of the 30S ribosomal subunit. Contacts proteins S9 and S11.

Its function is as follows. One of the primary rRNA binding proteins, it binds directly to 16S rRNA where it nucleates assembly of the head domain of the 30S subunit. Is located at the subunit interface close to the decoding center, probably blocks exit of the E-site tRNA. In Neorickettsia sennetsu (strain ATCC VR-367 / Miyayama) (Ehrlichia sennetsu), this protein is Small ribosomal subunit protein uS7.